The chain runs to 351 residues: UDP-3-O-acylglucosamine N-acyltransferase (351 aa).

H240 serves as the catalytic Proton acceptor.

This sequence belongs to the transferase hexapeptide repeat family. LpxD subfamily. As to quaternary structure, homotrimer.

The enzyme catalyses a UDP-3-O-[(3R)-3-hydroxyacyl]-alpha-D-glucosamine + a (3R)-hydroxyacyl-[ACP] = a UDP-2-N,3-O-bis[(3R)-3-hydroxyacyl]-alpha-D-glucosamine + holo-[ACP] + H(+). It functions in the pathway bacterial outer membrane biogenesis; LPS lipid A biosynthesis. Its function is as follows. Catalyzes the N-acylation of UDP-3-O-acylglucosamine using 3-hydroxyacyl-ACP as the acyl donor. Is involved in the biosynthesis of lipid A, a phosphorylated glycolipid that anchors the lipopolysaccharide to the outer membrane of the cell. This is UDP-3-O-acylglucosamine N-acyltransferase from Pseudomonas syringae pv. tomato (strain ATCC BAA-871 / DC3000).